The sequence spans 314 residues: Olfactory receptor 9A1 (314 aa).

Over 1–24 the chain is Extracellular; it reads MLGNYSSATEFFLLGFPGSQEVCR. An N-linked (GlcNAc...) asparagine glycan is attached at asparagine 4. Residues 25–45 traverse the membrane as a helical segment; that stretch reads ILFATFFLLYAVTVMGNVVII. At 46-64 the chain is on the cytoplasmic side; the sequence is ITVCVDKCLQSPIYFFLGH. A helical membrane pass occupies residues 65-85; sequence LCVLEILITSTAVPFMLWGLL. Topologically, residues 86-99 are extracellular; the sequence is LPSTQIMSLTACAA. A disulfide bridge links cysteine 97 with cysteine 179. Residues 100-120 form a helical membrane-spanning segment; sequence QLYLYLSLGTLELALMGVMAV. Topologically, residues 121–140 are cytoplasmic; sequence DRYVAVCNPLRYNIIMNSST. A helical membrane pass occupies residues 141-161; the sequence is FIWVIIVSWVLGFLSEIWPVY. Residues 162 to 196 lie on the Extracellular side of the membrane; that stretch reads ATFQLTFCKSSVLDHFYCDRGQLLKVSCEDTLFRE. A helical transmembrane segment spans residues 197–217; it reads FILFLMAVFIIIGSLIPTIVS. Residues 218–239 lie on the Cytoplasmic side of the membrane; that stretch reads YTYIISTNLKIPSASGWRKSFS. The helical transmembrane segment at 240–260 threads the bilayer; sequence TCASHFTYVVIGYGSCLFLYV. Residues 261 to 271 are Extracellular-facing; it reads KPKQTQAAEYN. The chain crosses the membrane as a helical span at residues 272-292; it reads RVVSLLVLVVTPFLNPFIFTL. Topologically, residues 293-314 are cytoplasmic; it reads RNDKFIQAFGDGMKHCYKLLKN.

Belongs to the G-protein coupled receptor 1 family.

The protein resides in the cell membrane. Odorant receptor. The protein is Olfactory receptor 9A1 (OR9A1P) of Homo sapiens (Human).